Consider the following 81-residue polypeptide: uncharacterized protein (81 aa).

This is an uncharacterized protein from Saccharomyces cerevisiae (strain ATCC 204508 / S288c) (Baker's yeast).